Reading from the N-terminus, the 490-residue chain is UDP-N-acetylmuramate--L-alanine ligase (490 aa).

122-128 serves as a coordination point for ATP; it reads GTHGKTS.

Belongs to the MurCDEF family.

The protein localises to the cytoplasm. The catalysed reaction is UDP-N-acetyl-alpha-D-muramate + L-alanine + ATP = UDP-N-acetyl-alpha-D-muramoyl-L-alanine + ADP + phosphate + H(+). Its pathway is cell wall biogenesis; peptidoglycan biosynthesis. Functionally, cell wall formation. The chain is UDP-N-acetylmuramate--L-alanine ligase from Mycobacteroides abscessus (strain ATCC 19977 / DSM 44196 / CCUG 20993 / CIP 104536 / JCM 13569 / NCTC 13031 / TMC 1543 / L948) (Mycobacterium abscessus).